The primary structure comprises 338 residues: Patr class I histocompatibility antigen, alpha chain G (338 aa).

The signal sequence occupies residues 1 to 24 (MVVMAPRTLFLLLSGALTLTETWA). Residues 25–114 (GSHSMRYFSA…LRGYYNQSEA (90 aa)) are alpha-1. Topologically, residues 25-308 (GSHSMRYFSA…KQSSLPTIPI (284 aa)) are extracellular. N-linked (GlcNAc...) asparagine glycosylation occurs at N110. Residues 115–206 (SSHTLQWMIG…ENGKEMLQRA (92 aa)) are alpha-2. Cystine bridges form between C125–C188 and C227–C283. The alpha-3 stretch occupies residues 207 to 298 (DPPKTHVTHH…GLPEPLMLRW (92 aa)). An Ig-like C1-type domain is found at 209–299 (PKTHVTHHPV…LPEPLMLRWK (91 aa)). The segment at 299-308 (KQSSLPTIPI) is connecting peptide. Residues 309–332 (MGIVAGLVVLAAVVTGAAVAAVLW) traverse the membrane as a helical segment. The Cytoplasmic portion of the chain corresponds to 333–338 (RKKSSD).

Belongs to the MHC class I family. Heterodimer of an alpha chain and a beta chain (beta-2-microglobulin). Homodimer; disulfide-linked. Binds to LILRB1 and LILRB2.

The protein resides in the cell membrane. In terms of biological role, involved in the presentation of foreign antigens to the immune system. The chain is Patr class I histocompatibility antigen, alpha chain G (Patr-G) from Pan troglodytes (Chimpanzee).